We begin with the raw amino-acid sequence, 674 residues long: Zinc finger protein 750 (674 aa).

The segment at Tyr-25–Asn-51 adopts a CCHC-type zinc-finger fold. 4 residues coordinate Zn(2+): Cys-27, Cys-30, His-43, and Cys-49. Disordered stretches follow at residues Glu-105–Val-125, Leu-370–Ser-466, and Thr-594–Ser-674. Composition is skewed to polar residues over residues Ser-401–Gly-411 and Asp-444–Ser-466.

The protein localises to the nucleus. Its function is as follows. Transcription factor involved in epidermis differentiation. This is Zinc finger protein 750 (znf750) from Xenopus laevis (African clawed frog).